We begin with the raw amino-acid sequence, 75 residues long: Dermaseptin-related peptide (75 aa).

The N-terminal stretch at 1–22 (MAFLNKSLLLVLFLGLVSLSIC) is a signal peptide. A propeptide spanning residues 23–43 (EEERRENEDEEEQEDDEQSEM) is cleaved from the precursor. Residues 24–44 (EERRENEDEEEQEDDEQSEMR) are disordered. Residues 30–40 (EDEEEQEDDEQ) show a composition bias toward acidic residues. Glutamine 72 is subject to Glutamine amide. Residues 74 to 75 (EQ) constitute a propeptide that is removed on maturation.

In terms of tissue distribution, expressed by the skin glands.

Its subcellular location is the secreted. Has antibacterial activity against Gram-positive bacterium M.luteus NCT C2665 but not against Gram-negative bacterium E.coli K12D31. This is Dermaseptin-related peptide from Agalychnis callidryas (Red-eyed tree frog).